Here is a 283-residue protein sequence, read N- to C-terminus: Pantothenate synthetase 1 (283 aa).

30–37 provides a ligand contact to ATP; that stretch reads MGYLHDGH. Catalysis depends on His-37, which acts as the Proton donor. A (R)-pantoate-binding site is contributed by Gln-61. Gln-61 contacts beta-alanine. 147-150 provides a ligand contact to ATP; the sequence is GQKD. Position 153 (Gln-153) interacts with (R)-pantoate. ATP is bound by residues Val-176 and 184–187; that span reads MSSR.

Belongs to the pantothenate synthetase family. In terms of assembly, homodimer.

The protein localises to the cytoplasm. It carries out the reaction (R)-pantoate + beta-alanine + ATP = (R)-pantothenate + AMP + diphosphate + H(+). It functions in the pathway cofactor biosynthesis; (R)-pantothenate biosynthesis; (R)-pantothenate from (R)-pantoate and beta-alanine: step 1/1. Its function is as follows. Catalyzes the condensation of pantoate with beta-alanine in an ATP-dependent reaction via a pantoyl-adenylate intermediate. The polypeptide is Pantothenate synthetase 1 (Bradyrhizobium diazoefficiens (strain JCM 10833 / BCRC 13528 / IAM 13628 / NBRC 14792 / USDA 110)).